The sequence spans 341 residues: UDP-3-O-acylglucosamine N-acyltransferase (341 aa).

The Proton acceptor role is filled by histidine 241.

It belongs to the transferase hexapeptide repeat family. LpxD subfamily. Homotrimer.

The catalysed reaction is a UDP-3-O-[(3R)-3-hydroxyacyl]-alpha-D-glucosamine + a (3R)-hydroxyacyl-[ACP] = a UDP-2-N,3-O-bis[(3R)-3-hydroxyacyl]-alpha-D-glucosamine + holo-[ACP] + H(+). It participates in bacterial outer membrane biogenesis; LPS lipid A biosynthesis. Its function is as follows. Catalyzes the N-acylation of UDP-3-O-acylglucosamine using 3-hydroxyacyl-ACP as the acyl donor. Is involved in the biosynthesis of lipid A, a phosphorylated glycolipid that anchors the lipopolysaccharide to the outer membrane of the cell. The chain is UDP-3-O-acylglucosamine N-acyltransferase from Haemophilus ducreyi (strain 35000HP / ATCC 700724).